The chain runs to 325 residues: UPF0285 protein MM_0679 (325 aa).

This sequence belongs to the UPF0285 family.

The chain is UPF0285 protein MM_0679 from Methanosarcina mazei (strain ATCC BAA-159 / DSM 3647 / Goe1 / Go1 / JCM 11833 / OCM 88) (Methanosarcina frisia).